Reading from the N-terminus, the 54-residue chain is Preprotein translocase subunit SecG (54 aa).

The Cytoplasmic portion of the chain corresponds to 1-30 (MSKNKQDAGLSTSAGLVRYMDEDASKIKIA). A helical membrane pass occupies residues 31 to 52 (PEKVLGITISIMVLLFILNYGL). The Extracellular segment spans residues 53–54 (LA).

Belongs to the SEC61-beta family. Component of the protein translocase complex. Heterotrimer consisting of alpha (SecY), beta (SecG) and gamma (SecE) subunits. Can form oligomers of the heterotrimer.

The protein resides in the cell membrane. Its function is as follows. Involved in protein export. The function of the beta subunit is unknown, but it may be involved in stabilization of the trimeric complex. The chain is Preprotein translocase subunit SecG from Methanococcus aeolicus (strain ATCC BAA-1280 / DSM 17508 / OCM 812 / Nankai-3).